The primary structure comprises 280 residues: uncharacterized protein (280 aa).

Residues 1-78 form the HTH rpiR-type domain; that stretch reads MDVIQRIKEK…VLLAQSISRA (78 aa). The H-T-H motif DNA-binding region spans 37–57; sequence ISDLSEKAGVKSEASVVKFYK. Residues 123–263 enclose the SIS domain; it reads TVDLFKNAQR…YTLLAARDPR (141 aa).

This is an uncharacterized protein from Thermotoga maritima (strain ATCC 43589 / DSM 3109 / JCM 10099 / NBRC 100826 / MSB8).